A 206-amino-acid chain; its full sequence is Recombination protein RecR (206 aa).

Residues 58 to 73 (CNICGYITEKNICNFC) form a C4-type zinc finger. The 98-residue stretch at 81–178 (STIMIVADNR…KITKLAYGIP (98 aa)) folds into the Toprim domain.

The protein belongs to the RecR family.

Functionally, may play a role in DNA repair. It seems to be involved in an RecBC-independent recombinational process of DNA repair. It may act with RecF and RecO. The sequence is that of Recombination protein RecR from Phytoplasma mali (strain AT).